The chain runs to 233 residues: METSASSSQPQDNSQVHRETEDVDYGETDFHKQDGKAGLFSQEQYERNKSSSSSSSSSSSSSSSSSSSSSESNDEDQQPRATGKHRRSLGAGYPHGNGSPGPGHGEPDVLKDELQLYGDAPGEVVPSGESGLRRRGSDPASGEVEASQLRRLNIKKDDEFFHFVLLCFAIGALLVCYHYYADWFMSLGVGLLTFASLETVGIYFGLVYRIHSVLQGFIPLFQKFRLTGFRKTD.

The residue at position 1 (Met1) is an N-acetylmethionine. The span at 1-14 (METSASSSQPQDNS) shows a compositional bias: polar residues. The disordered stretch occupies residues 1–143 (METSASSSQP…RRGSDPASGE (143 aa)). The segment covering 50-70 (SSSSSSSSSSSSSSSSSSSSS) has biased composition (low complexity). Gly residues predominate over residues 93-104 (YPHGNGSPGPGH). Basic and acidic residues predominate over residues 105 to 114 (GEPDVLKDEL). Residue Ser137 is modified to Phosphoserine. Helical transmembrane passes span 160-180 (FFHFVLLCFAIGALLVCYHYY) and 187-207 (LGVGLLTFASLETVGIYFGLV).

Its subcellular location is the membrane. The sequence is that of Transmembrane protein 40 (TMEM40) from Homo sapiens (Human).